The chain runs to 240 residues: UDP-2,3-diacylglucosamine hydrolase (240 aa).

D8, H10, D41, N79, and H114 together coordinate Mn(2+). 79 to 80 (NR) is a binding site for substrate. The substrate site is built by D122, S160, N164, K167, and H195. Mn(2+) contacts are provided by H195 and H197.

The protein belongs to the LpxH family. It depends on Mn(2+) as a cofactor.

It is found in the cell inner membrane. It carries out the reaction UDP-2-N,3-O-bis[(3R)-3-hydroxytetradecanoyl]-alpha-D-glucosamine + H2O = 2-N,3-O-bis[(3R)-3-hydroxytetradecanoyl]-alpha-D-glucosaminyl 1-phosphate + UMP + 2 H(+). It functions in the pathway glycolipid biosynthesis; lipid IV(A) biosynthesis; lipid IV(A) from (3R)-3-hydroxytetradecanoyl-[acyl-carrier-protein] and UDP-N-acetyl-alpha-D-glucosamine: step 4/6. Functionally, hydrolyzes the pyrophosphate bond of UDP-2,3-diacylglucosamine to yield 2,3-diacylglucosamine 1-phosphate (lipid X) and UMP by catalyzing the attack of water at the alpha-P atom. Involved in the biosynthesis of lipid A, a phosphorylated glycolipid that anchors the lipopolysaccharide to the outer membrane of the cell. This chain is UDP-2,3-diacylglucosamine hydrolase, found in Salmonella typhi.